Consider the following 592-residue polypeptide: Probable translation initiation factor IF-2 (592 aa).

Residues 5–226 (IRSPFVVVMG…AGVSQRFIPR (222 aa)) form the tr-type G domain. The segment at 14–21 (GHVDVGKT) is G1. Position 14 to 21 (14 to 21 (GHVDVGKT)) interacts with GTP. The interval 39 to 43 (MITQH) is G2. The segment at 80–83 (DTPG) is G3. GTP-binding positions include 80-84 (DTPGH) and 134-137 (NKLD). The segment at 134–137 (NKLD) is G4. Residues 202-204 (SAV) are G5.

This sequence belongs to the TRAFAC class translation factor GTPase superfamily. Classic translation factor GTPase family. IF-2 subfamily.

In terms of biological role, function in general translation initiation by promoting the binding of the formylmethionine-tRNA to ribosomes. Seems to function along with eIF-2. The sequence is that of Probable translation initiation factor IF-2 from Pyrobaculum calidifontis (strain DSM 21063 / JCM 11548 / VA1).